Reading from the N-terminus, the 125-residue chain is Large ribosomal subunit protein bL12 (125 aa).

Belongs to the bacterial ribosomal protein bL12 family. Homodimer. Part of the ribosomal stalk of the 50S ribosomal subunit. Forms a multimeric L10(L12)X complex, where L10 forms an elongated spine to which 2 to 4 L12 dimers bind in a sequential fashion. Binds GTP-bound translation factors.

Its function is as follows. Forms part of the ribosomal stalk which helps the ribosome interact with GTP-bound translation factors. Is thus essential for accurate translation. This Dictyoglomus thermophilum (strain ATCC 35947 / DSM 3960 / H-6-12) protein is Large ribosomal subunit protein bL12.